A 329-amino-acid chain; its full sequence is MAPSQVEDISKTELETPEHCPGPESEQAGKEDACNGCPNQSICSSQLPQGPDPDLPLINKRLSQIDHKILVLSGKGGVGKSTFTSMLSWALAADEDIEVGAMDLDICGPSLPRMLGAEGESIHQSNSGWSPVYVADNLGLMSISFMLPDADSAVIWRGAKKNGLIKQFLKDVNWGEHLDYLVVDTPPGTSDEHLSVTTYMKEVGIDGALIVTTPQEVALLDVRKEIDFCRKANIKILGLVENMSGFVCPNCKGESQIFRPTTGGGKKLCEDLKLPYLGAVPLDPRIGKACDAGESFFDSYADSPASSAILDVVDALRDQIEISLEKLNI.

The tract at residues 1–33 (MAPSQVEDISKTELETPEHCPGPESEQAGKEDA) is disordered. Basic and acidic residues predominate over residues 8-18 (DISKTELETPE). [4Fe-4S] cluster is bound by residues Cys20, Cys34, Cys37, and Cys43. 74–81 (GKGGVGKS) contacts ATP. 2 residues coordinate [4Fe-4S] cluster: Cys248 and Cys251.

It belongs to the Mrp/NBP35 ATP-binding proteins family. NUBP1/NBP35 subfamily. Heterotetramer of 2 NBP35 and 2 CFD1 chains. [4Fe-4S] cluster serves as cofactor.

It is found in the cytoplasm. The protein resides in the nucleus. Its function is as follows. Component of the cytosolic iron-sulfur (Fe/S) protein assembly (CIA) machinery. Required for maturation of extramitochondrial Fe-S proteins. The NBP35-CFD1 heterotetramer forms a Fe-S scaffold complex, mediating the de novo assembly of an Fe-S cluster and its transfer to target apoproteins. Required for biogenesis and export of both ribosomal subunits, which may reflect a role in assembly of the Fe/S clusters in RLI1, a protein which performs rRNA processing and ribosome export. This is Cytosolic Fe-S cluster assembly factor NBP35 from Debaryomyces hansenii (strain ATCC 36239 / CBS 767 / BCRC 21394 / JCM 1990 / NBRC 0083 / IGC 2968) (Yeast).